Reading from the N-terminus, the 420-residue chain is Vasopressin V1a receptor (420 aa).

The disordered stretch occupies residues 1–20 (MSFPRGSYDPAASNSSPWWP). The Extracellular segment spans residues 1–54 (MSFPRGSYDPAASNSSPWWPLSAEDANSSWEAAGHQKGSDPSGDVRNEELAKLE). N-linked (GlcNAc...) asparagine glycosylation is present at Asn27. Residues 55–75 (IAVLAVIFVVAVLGNSSVLLA) traverse the membrane as a helical segment. Residues 76-92 (LHRTPRKTSRMHLFIRH) lie on the Cytoplasmic side of the membrane. Residues 93–113 (LSLADLAVAFFQVLPQLCWDI) form a helical membrane-spanning segment. Over 114 to 125 (TYRFRGPDWLCR) the chain is Extracellular. Cys124 and Cys205 are joined by a disulfide. A helical transmembrane segment spans residues 126–146 (VVKHLQVFAMFASAYMLVVMT). Topologically, residues 147 to 168 (ADRYIAVCHPLKTLQQPTRRSR) are cytoplasmic. The helical transmembrane segment at 169-189 (LMIAASWVLSFLLSTPQYFIF) threads the bilayer. Residues 190-225 (SMIEIEVNNGTKTQDCWATFIQPWGTRAYVTWMTSG) are Extracellular-facing. Asn198 is a glycosylation site (N-linked (GlcNAc...) asparagine). Residues 226-246 (VFVVPVVILGTCYGFICYHIW) form a helical membrane-spanning segment. The Cytoplasmic segment spans residues 247–294 (RNVRGKTASRQSKGSGEDVAPFHKGLLVTPCVSSVKTISRAKIRTVKM). Residues 295–315 (TFVIVTAYILCWAPFFIVQMW) traverse the membrane as a helical segment. Over 316–331 (SVWDDNFIWTDSENPS) the chain is Extracellular. The chain crosses the membrane as a helical span at residues 332–352 (ITITALLASLNSCCNPWIYMF). Topologically, residues 353-420 (FSGHLLQDCV…RSIRFIPVST (68 aa)) are cytoplasmic. S-palmitoyl cysteine attachment occurs at residues Cys367 and Cys368. Positions 379 to 411 (DSDNMSRRHTSYSNNRSPTNSTGTWKDSPKSSR) are disordered. The segment covering 389–403 (SYSNNRSPTNSTGTW) has biased composition (polar residues). Phosphoserine is present on Ser406.

It belongs to the G-protein coupled receptor 1 family. Vasopressin/oxytocin receptor subfamily.

The protein resides in the cell membrane. Its function is as follows. Receptor for arginine vasopressin. The activity of this receptor is mediated by G proteins which activate a phosphatidyl-inositol-calcium second messenger system. Involved in social memory formation. This is Vasopressin V1a receptor (Avpr1a) from Microtus ochrogaster (Prairie vole).